The primary structure comprises 509 residues: Maturase K (509 aa).

Belongs to the intron maturase 2 family. MatK subfamily.

It is found in the plastid. The protein localises to the chloroplast. Usually encoded in the trnK tRNA gene intron. Probably assists in splicing its own and other chloroplast group II introns. The sequence is that of Maturase K from Hottonia palustris (Water-violet).